Reading from the N-terminus, the 558-residue chain is Dihydroxy-acid dehydratase (558 aa).

A [2Fe-2S] cluster-binding site is contributed by Cys-50. Residue Asp-82 coordinates Mg(2+). Cys-123 provides a ligand contact to [2Fe-2S] cluster. 2 residues coordinate Mg(2+): Asp-124 and Lys-125. Lys-125 bears the N6-carboxylysine mark. Cys-195 provides a ligand contact to [2Fe-2S] cluster. A Mg(2+)-binding site is contributed by Glu-447. The active-site Proton acceptor is the Ser-472.

This sequence belongs to the IlvD/Edd family. Homodimer. The cofactor is [2Fe-2S] cluster. It depends on Mg(2+) as a cofactor.

It carries out the reaction (2R)-2,3-dihydroxy-3-methylbutanoate = 3-methyl-2-oxobutanoate + H2O. The catalysed reaction is (2R,3R)-2,3-dihydroxy-3-methylpentanoate = (S)-3-methyl-2-oxopentanoate + H2O. The protein operates within amino-acid biosynthesis; L-isoleucine biosynthesis; L-isoleucine from 2-oxobutanoate: step 3/4. Its pathway is amino-acid biosynthesis; L-valine biosynthesis; L-valine from pyruvate: step 3/4. Functionally, functions in the biosynthesis of branched-chain amino acids. Catalyzes the dehydration of (2R,3R)-2,3-dihydroxy-3-methylpentanoate (2,3-dihydroxy-3-methylvalerate) into 2-oxo-3-methylpentanoate (2-oxo-3-methylvalerate) and of (2R)-2,3-dihydroxy-3-methylbutanoate (2,3-dihydroxyisovalerate) into 2-oxo-3-methylbutanoate (2-oxoisovalerate), the penultimate precursor to L-isoleucine and L-valine, respectively. The polypeptide is Dihydroxy-acid dehydratase (Saccharolobus islandicus (strain Y.N.15.51 / Yellowstone #2) (Sulfolobus islandicus)).